The sequence spans 178 residues: Orotate phosphoribosyltransferase (178 aa).

5-phospho-alpha-D-ribose 1-diphosphate-binding positions include Arg-92, Lys-93, Lys-96, and 118–126 (EDVTTTGGS). Residues Thr-122 and Arg-150 each contribute to the orotate site.

It belongs to the purine/pyrimidine phosphoribosyltransferase family. PyrE subfamily. Homodimer. The cofactor is Mg(2+).

It catalyses the reaction orotidine 5'-phosphate + diphosphate = orotate + 5-phospho-alpha-D-ribose 1-diphosphate. It participates in pyrimidine metabolism; UMP biosynthesis via de novo pathway; UMP from orotate: step 1/2. In terms of biological role, catalyzes the transfer of a ribosyl phosphate group from 5-phosphoribose 1-diphosphate to orotate, leading to the formation of orotidine monophosphate (OMP). In Methanosphaera stadtmanae (strain ATCC 43021 / DSM 3091 / JCM 11832 / MCB-3), this protein is Orotate phosphoribosyltransferase.